A 205-amino-acid chain; its full sequence is Cytochrome c biogenesis ATP-binding export protein CcmA 2 (205 aa).

The ABC transporter domain maps to 2–205; sequence LEARDLHCER…LALTGGEAGL (204 aa). 34–41 is an ATP binding site; it reads GGNGAGKT.

The protein belongs to the ABC transporter superfamily. CcmA exporter (TC 3.A.1.107) family. In terms of assembly, the complex is composed of two ATP-binding proteins (CcmA) and two transmembrane proteins (CcmB).

It is found in the cell inner membrane. The enzyme catalyses heme b(in) + ATP + H2O = heme b(out) + ADP + phosphate + H(+). Its function is as follows. Part of the ABC transporter complex CcmAB involved in the biogenesis of c-type cytochromes; once thought to export heme, this seems not to be the case, but its exact role is uncertain. Responsible for energy coupling to the transport system. The protein is Cytochrome c biogenesis ATP-binding export protein CcmA 2 of Salmonella paratyphi A (strain ATCC 9150 / SARB42).